The sequence spans 360 residues: Phosphoserine aminotransferase (360 aa).

Position 42 (Arg42) interacts with L-glutamate. Pyridoxal 5'-phosphate is bound by residues Trp102, Thr152, Asp171, and Gln194. Lys195 carries the N6-(pyridoxal phosphate)lysine modification. Residue 237–238 (NT) coordinates pyridoxal 5'-phosphate.

The protein belongs to the class-V pyridoxal-phosphate-dependent aminotransferase family. SerC subfamily. As to quaternary structure, homodimer. It depends on pyridoxal 5'-phosphate as a cofactor.

The protein localises to the cytoplasm. The catalysed reaction is O-phospho-L-serine + 2-oxoglutarate = 3-phosphooxypyruvate + L-glutamate. It catalyses the reaction 4-(phosphooxy)-L-threonine + 2-oxoglutarate = (R)-3-hydroxy-2-oxo-4-phosphooxybutanoate + L-glutamate. Its pathway is amino-acid biosynthesis; L-serine biosynthesis; L-serine from 3-phospho-D-glycerate: step 2/3. The protein operates within cofactor biosynthesis; pyridoxine 5'-phosphate biosynthesis; pyridoxine 5'-phosphate from D-erythrose 4-phosphate: step 3/5. In terms of biological role, catalyzes the reversible conversion of 3-phosphohydroxypyruvate to phosphoserine and of 3-hydroxy-2-oxo-4-phosphonooxybutanoate to phosphohydroxythreonine. The chain is Phosphoserine aminotransferase from Coxiella burnetii (strain RSA 493 / Nine Mile phase I).